A 100-amino-acid chain; its full sequence is Large ribosomal subunit protein uL23 (100 aa).

This sequence belongs to the universal ribosomal protein uL23 family. As to quaternary structure, part of the 50S ribosomal subunit. Contacts protein L29, and trigger factor when it is bound to the ribosome.

One of the early assembly proteins it binds 23S rRNA. One of the proteins that surrounds the polypeptide exit tunnel on the outside of the ribosome. Forms the main docking site for trigger factor binding to the ribosome. The sequence is that of Large ribosomal subunit protein uL23 from Prochlorococcus marinus (strain MIT 9215).